The chain runs to 476 residues: MDEAGSSASGGGFRPGVDSLDEPPNSRIFLVISKYTPESVLRERFSPFGDIQDIWVVRDKHTKESKGIAFVKFARSSQACRAMEEMHGQCLGPNDTKPIKVFIAQSRSSGSHRDVEDEELTRIFVMIPKSYTEEDLREKFKVYGDIEYCSIIKNKVTGESKGLGYVRYLKPSQAAQAIENCDRSFRAILAEPKNKASESSEQDYYSNMRQEALGHEPRVNMFPFVGEQQSEFSSFDKNDSRGQEAISKRLSVVSRVPFTEEQLFSIFDIVPGLEYCEVQRDPYSNYGHGVVQYFNVASAIYAKYKLHGFQYPPGNRIGVSFIDDGSNATDLLRKMATQMVAAQLASMVWNNPSQQQFMQFGGSSGSQLPQIQTDVVLPSCKKKAPAETPVKERLFIVFNPHPLPLDVLEDIFCRFGNLIEVYLVSGKNVGYAKYADRISANDAIATLHGKILNGVRLKVMLADSPREESNKRQRTY.

Residues 1 to 20 form a disordered region; that stretch reads MDEAGSSASGGGFRPGVDSL. RRM domains follow at residues 26–106 and 121–195; these read SRIF…IAQS and TRIF…PKNK. Lys-34 is covalently cross-linked (Glycyl lysine isopeptide (Lys-Gly) (interchain with G-Cter in SUMO2)). Phosphoserine occurs at positions 199 and 464. The 73-residue stretch at 392–464 folds into the RRM 3 domain; the sequence is ERLFIVFNPH…VRLKVMLADS (73 aa).

The protein localises to the cytoplasm. It is found in the nucleus. RNA-binding protein with binding specificity for poly(C). May play an important role in neural development. The polypeptide is RNA-binding protein 45 (RBM45) (Homo sapiens (Human)).